The primary structure comprises 142 residues: Large ribosomal subunit protein uL22c (142 aa).

The protein belongs to the universal ribosomal protein uL22 family. Part of the 50S ribosomal subunit.

The protein localises to the plastid. The protein resides in the chloroplast. Its function is as follows. This protein binds specifically to 23S rRNA. Functionally, the globular domain of the protein is located near the polypeptide exit tunnel on the outside of the subunit, while an extended beta-hairpin is found that lines the wall of the exit tunnel in the center of the 70S ribosome. The polypeptide is Large ribosomal subunit protein uL22c (rpl22) (Pinus koraiensis (Korean pine)).